The chain runs to 279 residues: Elongation factor Ts (279 aa).

An involved in Mg(2+) ion dislocation from EF-Tu region spans residues 80–83; it reads TDFV.

The protein belongs to the EF-Ts family.

It localises to the cytoplasm. In terms of biological role, associates with the EF-Tu.GDP complex and induces the exchange of GDP to GTP. It remains bound to the aminoacyl-tRNA.EF-Tu.GTP complex up to the GTP hydrolysis stage on the ribosome. This is Elongation factor Ts from Borreliella afzelii (strain PKo) (Borrelia afzelii).